The following is a 165-amino-acid chain: CDP-archaeol synthase (165 aa).

3 consecutive transmembrane segments (helical) span residues Ile-4–Ala-24, Leu-78–Val-98, and Phe-118–Leu-138.

It belongs to the CDP-archaeol synthase family. It depends on Mg(2+) as a cofactor.

It localises to the cell membrane. The catalysed reaction is 2,3-bis-O-(geranylgeranyl)-sn-glycerol 1-phosphate + CTP + H(+) = CDP-2,3-bis-O-(geranylgeranyl)-sn-glycerol + diphosphate. It functions in the pathway membrane lipid metabolism; glycerophospholipid metabolism. Its function is as follows. Catalyzes the formation of CDP-2,3-bis-(O-geranylgeranyl)-sn-glycerol (CDP-archaeol) from 2,3-bis-(O-geranylgeranyl)-sn-glycerol 1-phosphate (DGGGP) and CTP. This reaction is the third ether-bond-formation step in the biosynthesis of archaeal membrane lipids. The chain is CDP-archaeol synthase from Pyrobaculum calidifontis (strain DSM 21063 / JCM 11548 / VA1).